A 306-amino-acid polypeptide reads, in one-letter code: Methyl-CpG-binding domain-containing protein 7 (306 aa).

Residues 1-11 show a composition bias toward polar residues; that stretch reads MQTRSSSSPSA. Positions 1 to 21 are disordered; sequence MQTRSSSSPSANHRRETQLQI. 3 MBD domains span residues 21–92, 106–171, and 172–242; these read IADP…QDKT, GVEY…RVLQ, and NRRG…ERLP. Asymmetric dimethylarginine occurs at positions 118, 145, and 174. A required for interaction with PRMT11 region spans residues 163–306; that stretch reads IEQQLRVLQN…AFVSLIEDRS (144 aa).

In terms of assembly, interacts with PRMT11. Interacts (via C-terminus) with IDM2, but not with IDM1. Interacts with IDM3. Part of a complex made of MBD7, IDM1, IDM2 and IDM3. Post-translationally, methylated by PRMT11. In terms of tissue distribution, expressed in leaves, buds, flowers, stems, siliques, mature seeds and roots.

Its subcellular location is the nucleus. The protein resides in the chromosome. Transcriptional regulator that binds CpG islands in promoters where the DNA is methylated at position 5 of cytosine within CpG dinucleotides. May directly affect chromatin structure by inducing intra- and inter- chromatin compaction via bridging over multiple methylated CpG sites. Acts as an anti-silencing factor that prevents DNA hypermethylation and gene repression. Requires high mCG density for binding. Recognizes preferentially mCGs located in transposable elements. Required for active DNA demethylation. Prefers to target genomic loci around chromocenters. The protein is Methyl-CpG-binding domain-containing protein 7 of Arabidopsis thaliana (Mouse-ear cress).